Here is a 284-residue protein sequence, read N- to C-terminus: Polyamine aminopropyltransferase (284 aa).

The PABS domain occupies 2–237 (ELWYTEKHTE…GHWLFGFASK (236 aa)). Position 31 (Gln31) interacts with S-methyl-5'-thioadenosine. The spermidine site is built by His62 and Asp86. Residues Glu106 and 137 to 138 (DG) each bind S-methyl-5'-thioadenosine. Asp155 (proton acceptor) is an active-site residue. Residue 155 to 158 (DSTD) participates in spermidine binding. Pro162 is a binding site for S-methyl-5'-thioadenosine.

It belongs to the spermidine/spermine synthase family. As to quaternary structure, homodimer or homotetramer.

The protein localises to the cytoplasm. It catalyses the reaction S-adenosyl 3-(methylsulfanyl)propylamine + putrescine = S-methyl-5'-thioadenosine + spermidine + H(+). It participates in amine and polyamine biosynthesis; spermidine biosynthesis; spermidine from putrescine: step 1/1. Its function is as follows. Catalyzes the irreversible transfer of a propylamine group from the amino donor S-adenosylmethioninamine (decarboxy-AdoMet) to putrescine (1,4-diaminobutane) to yield spermidine. This chain is Polyamine aminopropyltransferase, found in Clostridium botulinum (strain Alaska E43 / Type E3).